The primary structure comprises 42 residues: Snaclec lebecetin subunit alpha (42 aa).

A C-type lectin domain is found at 1 to 42; that stretch reads DQDCLPGWSSHEGHCYKVFNLDKTWEDAEKFCTEQPSNGHLV. C4 and C15 form a disulfide bridge.

As to quaternary structure, heterodimer of subunits alpha and beta; disulfide-linked. The cofactor is Ca(2+). Glycosylated. Expressed by the venom gland.

It is found in the secreted. In terms of biological role, binds to the platelet GPIb/IX/V receptor system and inhibits ristocetin-induced platelet aggregation in human platelet-rich plasma. Strongly inhibits platelet aggregation induced by ADP, calcium ionophore, thrombin and collagen. Does not inhibit U46619-induced platelet aggregation. This chain is Snaclec lebecetin subunit alpha, found in Macrovipera lebetinus (Levantine viper).